The primary structure comprises 156 residues: Small ribosomal subunit protein uS7 (156 aa).

Belongs to the universal ribosomal protein uS7 family. In terms of assembly, part of the 30S ribosomal subunit. Contacts proteins S9 and S11.

Its function is as follows. One of the primary rRNA binding proteins, it binds directly to 16S rRNA where it nucleates assembly of the head domain of the 30S subunit. Is located at the subunit interface close to the decoding center, probably blocks exit of the E-site tRNA. The sequence is that of Small ribosomal subunit protein uS7 from Dictyoglomus turgidum (strain DSM 6724 / Z-1310).